The following is a 235-amino-acid chain: Sugar fermentation stimulation protein homolog (235 aa).

It belongs to the SfsA family.

The chain is Sugar fermentation stimulation protein homolog from Pseudomonas aeruginosa (strain ATCC 15692 / DSM 22644 / CIP 104116 / JCM 14847 / LMG 12228 / 1C / PRS 101 / PAO1).